The chain runs to 225 residues: UPF0758 protein Ssed_0385 (225 aa).

Residues 102-224 (ILSDPDLTRD…IVSFAERGWI (123 aa)) enclose the MPN domain. Residues His173, His175, and Asp186 each contribute to the Zn(2+) site. Positions 173–186 (HNHPSGVAEPSLAD) match the JAMM motif motif.

This sequence belongs to the UPF0758 family.

The sequence is that of UPF0758 protein Ssed_0385 from Shewanella sediminis (strain HAW-EB3).